Consider the following 364-residue polypeptide: Peroxisome biogenesis protein 3-2 (364 aa).

A helical membrane pass occupies residues 15-32; the sequence is VLVTAGCLGSGYLLYKLY. Positions 33 to 62 form a coiled coil; sequence NSHTRRLADLERELAHERENDEIIKTQMKA.

This sequence belongs to the peroxin-3 family.

Its subcellular location is the peroxisome membrane. Its function is as follows. Involved in morphology determination of peroxisomes, but not in import of peroxisomal matrix proteins. May act as a docking factor for PEX19 and be necessary for the import of peroxisomal membrane proteins in the peroxisomes. The polypeptide is Peroxisome biogenesis protein 3-2 (PEX3-2) (Arabidopsis thaliana (Mouse-ear cress)).